Consider the following 445-residue polypeptide: MGITVLKNEGLDFHARISTPLSEIDDDIQKELLDLTKKVKIAGFRAGKVPVSIVKKKYGTSVRNDIIERRINHSVNHVIKEHNLNIIGRPKIEELQNESDKALEFTVKIELLPKITIPDLKKISLDRPKLEVNSKDVEEQLEKLAALTKNYTKESKAKIKDGDQVTIDAIGYIKEKAFEDGKLNDFKVIIGSNALIPGFEKQLIGSKTGSEVDVNVTFPENYHAKDLAGKDARFVVQIKAVHTAEPTVIDDEFAKKFQSNSLEELRTHFTKQIENESEEAINTIMKMNLFDKLEKLLDFDVPESLLEQEKNILKSGTDKNEQDESLLKDKSSKEITAYYNKLALRRVRIGLLLAEYAKSKNLQLEPDDLRKVIMQQARNFPGQENMIFDFYKNNPRAIEGLKGPALEDKAVQYIFNHEIKLKEKKYTKEELEKYLEAEEQRITLV.

Residues 162-247 enclose the PPIase FKBP-type domain; the sequence is GDQVTIDAIG…IKAVHTAEPT (86 aa).

This sequence belongs to the FKBP-type PPIase family. Tig subfamily.

The protein resides in the cytoplasm. It carries out the reaction [protein]-peptidylproline (omega=180) = [protein]-peptidylproline (omega=0). Functionally, involved in protein export. Acts as a chaperone by maintaining the newly synthesized protein in an open conformation. Functions as a peptidyl-prolyl cis-trans isomerase. In Rickettsia peacockii (strain Rustic), this protein is Trigger factor.